Consider the following 387-residue polypeptide: Succinate--CoA ligase [ADP-forming] subunit beta (387 aa).

ATP-binding positions include Lys46, 53 to 55 (GRG), Glu99, Ala102, and Glu107. Mg(2+) is bound by residues Asn199 and Asp213. Substrate contacts are provided by residues Asn264 and 321–323 (GIV).

The protein belongs to the succinate/malate CoA ligase beta subunit family. In terms of assembly, heterotetramer of two alpha and two beta subunits. The cofactor is Mg(2+).

The enzyme catalyses succinate + ATP + CoA = succinyl-CoA + ADP + phosphate. It carries out the reaction GTP + succinate + CoA = succinyl-CoA + GDP + phosphate. It participates in carbohydrate metabolism; tricarboxylic acid cycle; succinate from succinyl-CoA (ligase route): step 1/1. Succinyl-CoA synthetase functions in the citric acid cycle (TCA), coupling the hydrolysis of succinyl-CoA to the synthesis of either ATP or GTP and thus represents the only step of substrate-level phosphorylation in the TCA. The beta subunit provides nucleotide specificity of the enzyme and binds the substrate succinate, while the binding sites for coenzyme A and phosphate are found in the alpha subunit. The chain is Succinate--CoA ligase [ADP-forming] subunit beta from Campylobacter jejuni subsp. jejuni serotype O:23/36 (strain 81-176).